A 721-amino-acid polypeptide reads, in one-letter code: K(+)-insensitive pyrophosphate-energized proton pump (721 aa).

Transmembrane regions (helical) follow at residues 8-28, 57-77, 82-102, 136-156, and 168-188; these read LLGV…AVWV, YRTL…AIDM, FGLT…AGYL, VMGL…YLVF, and LVAL…GGGI. Position 191 (lysine 191) interacts with substrate. Residues aspartate 194, aspartate 198, asparagine 221, and aspartate 224 each contribute to the Mg(2+) site. 5 helical membrane-spanning segments follow: residues 247 to 267, 294 to 314, 323 to 343, 374 to 394, and 416 to 436; these read AIFL…IILF, ISLA…IGAF, ALAL…IVKI, YGVG…VLGI, and AGIF…GIII. Aspartate 446 contacts Mg(2+). 4 helical membrane passes run 483-503, 527-547, 599-619, and 621-641; these read AIAS…FEIV, LINA…YFFS, FLIP…LLGW, and ALAG…LLMA. Positions 648, 672, and 676 each coordinate Ca(2+). Lysine 679 contacts substrate. Residues 698 to 718 traverse the membrane as a helical segment; it reads VVFTYVIVSTNIALGIWPSGL.

This sequence belongs to the H(+)-translocating pyrophosphatase (TC 3.A.10) family. K(+)-insensitive subfamily. In terms of assembly, homodimer. Mg(2+) serves as cofactor.

It localises to the cell membrane. It catalyses the reaction diphosphate + H2O + H(+)(in) = 2 phosphate + 2 H(+)(out). Functionally, proton pump that utilizes the energy of pyrophosphate hydrolysis as the driving force for proton movement across the membrane. Generates a proton motive force. The protein is K(+)-insensitive pyrophosphate-energized proton pump of Pyrobaculum aerophilum (strain ATCC 51768 / DSM 7523 / JCM 9630 / CIP 104966 / NBRC 100827 / IM2).